We begin with the raw amino-acid sequence, 46 residues long: uncharacterized protein (46 aa).

To equivalent protein in phage 82.

This is an uncharacterized protein from Escherichia coli (strain K12).